The sequence spans 279 residues: Methylthioribulose-1-phosphate dehydratase (279 aa).

Position 132 (cysteine 132) interacts with substrate. Positions 150 and 152 each coordinate Zn(2+). Residue glutamate 175 is the Proton donor/acceptor of the active site. Histidine 240 is a Zn(2+) binding site.

This sequence belongs to the aldolase class II family. MtnB subfamily. It depends on Zn(2+) as a cofactor.

Its subcellular location is the cytoplasm. The catalysed reaction is 5-(methylsulfanyl)-D-ribulose 1-phosphate = 5-methylsulfanyl-2,3-dioxopentyl phosphate + H2O. It participates in amino-acid biosynthesis; L-methionine biosynthesis via salvage pathway; L-methionine from S-methyl-5-thio-alpha-D-ribose 1-phosphate: step 2/6. Functionally, catalyzes the dehydration of methylthioribulose-1-phosphate (MTRu-1-P) into 2,3-diketo-5-methylthiopentyl-1-phosphate (DK-MTP-1-P). The chain is Methylthioribulose-1-phosphate dehydratase from Candida tropicalis (strain ATCC MYA-3404 / T1) (Yeast).